A 101-amino-acid chain; its full sequence is Putative pterin-4-alpha-carbinolamine dehydratase (101 aa).

It belongs to the pterin-4-alpha-carbinolamine dehydratase family.

The catalysed reaction is (4aS,6R)-4a-hydroxy-L-erythro-5,6,7,8-tetrahydrobiopterin = (6R)-L-erythro-6,7-dihydrobiopterin + H2O. This is Putative pterin-4-alpha-carbinolamine dehydratase from Nitrobacter winogradskyi (strain ATCC 25391 / DSM 10237 / CIP 104748 / NCIMB 11846 / Nb-255).